The following is a 379-amino-acid chain: uncharacterized protein (379 aa).

The helical transmembrane segment at V7 to F27 threads the bilayer.

Its subcellular location is the membrane. This is an uncharacterized protein from Caenorhabditis elegans.